A 1315-amino-acid polypeptide reads, in one-letter code: Serine/threonine-protein kinase 36 (1315 aa).

Positions 4 to 254 (YHVLEMIGEG…WPDLLYHPFI (251 aa)) constitute a Protein kinase domain. ATP is bound by residues 10 to 18 (IGEGSFGRV) and Lys33. Asp125 functions as the Proton acceptor in the catalytic mechanism. 2 disordered regions span residues 312–345 (EAMQ…PRLG) and 365–405 (SWAE…RSTD). The span at 379–397 (RENRTTPDCERAFPEERPE) shows a compositional bias: basic and acidic residues.

It belongs to the protein kinase superfamily. Ser/Thr protein kinase family. As to quaternary structure, interacts with SPAG16 and KIF27. The cofactor is Mg(2+).

It is found in the cytoplasm. It localises to the nucleus. The protein resides in the cytoskeleton. Its subcellular location is the cilium axoneme. It catalyses the reaction L-seryl-[protein] + ATP = O-phospho-L-seryl-[protein] + ADP + H(+). It carries out the reaction L-threonyl-[protein] + ATP = O-phospho-L-threonyl-[protein] + ADP + H(+). In terms of biological role, serine/threonine protein kinase which plays an important role in the sonic hedgehog (Shh) pathway by regulating the activity of GLI transcription factors. Controls the activity of the transcriptional regulators GLI1, GLI2 and GLI3 by opposing the effect of SUFU and promoting their nuclear localization. GLI2 requires an additional function of STK36 to become transcriptionally active, but the enzyme does not need to possess an active kinase catalytic site for this to occur. Required for postnatal development, possibly by regulating the homeostasis of cerebral spinal fluid or ciliary function. Essential for construction of the central pair apparatus of motile cilia. The chain is Serine/threonine-protein kinase 36 from Pongo abelii (Sumatran orangutan).